Here is a 140-residue protein sequence, read N- to C-terminus: MANRTIIAFDFGTKSIGVAIGQEVTGTARALTAFKAQDGTPDWQQVEKLLKEWQPNLVVVGLPLNMDGTEQPLTARARRFANRLHGRFGVQIALQDERLSTVEARANLFDRGGYRALDKGSVDAASAVIILESWFDEQAG.

Belongs to the YqgF nuclease family.

It localises to the cytoplasm. In terms of biological role, could be a nuclease involved in processing of the 5'-end of pre-16S rRNA. The protein is Putative pre-16S rRNA nuclease of Yersinia pseudotuberculosis serotype IB (strain PB1/+).